A 157-amino-acid chain; its full sequence is Putative low molecular weight protein-tyrosine-phosphatase slr0328 (157 aa).

Cysteine 7 acts as the Nucleophile in catalysis. Arginine 13 is an active-site residue. Aspartate 124 functions as the Proton donor in the catalytic mechanism.

The protein belongs to the low molecular weight phosphotyrosine protein phosphatase family.

The enzyme catalyses O-phospho-L-tyrosyl-[protein] + H2O = L-tyrosyl-[protein] + phosphate. The polypeptide is Putative low molecular weight protein-tyrosine-phosphatase slr0328 (Synechocystis sp. (strain ATCC 27184 / PCC 6803 / Kazusa)).